A 417-amino-acid polypeptide reads, in one-letter code: Serine--tRNA ligase (417 aa).

L-serine is bound at residue 226–228; the sequence is TSE. ATP-binding positions include 257 to 259 and Val273; that span reads RRE. Glu280 serves as a coordination point for L-serine. An ATP-binding site is contributed by 344-347; sequence ELTS. Thr379 is an L-serine binding site.

It belongs to the class-II aminoacyl-tRNA synthetase family. Type-1 seryl-tRNA synthetase subfamily. In terms of assembly, homodimer. The tRNA molecule binds across the dimer.

The protein resides in the cytoplasm. It catalyses the reaction tRNA(Ser) + L-serine + ATP = L-seryl-tRNA(Ser) + AMP + diphosphate + H(+). The catalysed reaction is tRNA(Sec) + L-serine + ATP = L-seryl-tRNA(Sec) + AMP + diphosphate + H(+). The protein operates within aminoacyl-tRNA biosynthesis; selenocysteinyl-tRNA(Sec) biosynthesis; L-seryl-tRNA(Sec) from L-serine and tRNA(Sec): step 1/1. Its function is as follows. Catalyzes the attachment of serine to tRNA(Ser). Is also able to aminoacylate tRNA(Sec) with serine, to form the misacylated tRNA L-seryl-tRNA(Sec), which will be further converted into selenocysteinyl-tRNA(Sec). The protein is Serine--tRNA ligase of Mycolicibacterium smegmatis (strain ATCC 700084 / mc(2)155) (Mycobacterium smegmatis).